A 638-amino-acid chain; its full sequence is 1-deoxy-D-xylulose-5-phosphate synthase (638 aa).

Thiamine diphosphate contacts are provided by residues His71 and 112 to 114; that span reads SHA. Asp144 provides a ligand contact to Mg(2+). Thiamine diphosphate is bound by residues 145–146, Asn173, Tyr284, and Glu365; that span reads GA. A Mg(2+)-binding site is contributed by Asn173.

The protein belongs to the transketolase family. DXPS subfamily. As to quaternary structure, homodimer. Requires Mg(2+) as cofactor. Thiamine diphosphate serves as cofactor.

It catalyses the reaction D-glyceraldehyde 3-phosphate + pyruvate + H(+) = 1-deoxy-D-xylulose 5-phosphate + CO2. It functions in the pathway metabolic intermediate biosynthesis; 1-deoxy-D-xylulose 5-phosphate biosynthesis; 1-deoxy-D-xylulose 5-phosphate from D-glyceraldehyde 3-phosphate and pyruvate: step 1/1. Catalyzes the acyloin condensation reaction between C atoms 2 and 3 of pyruvate and glyceraldehyde 3-phosphate to yield 1-deoxy-D-xylulose-5-phosphate (DXP). This is 1-deoxy-D-xylulose-5-phosphate synthase from Mycobacterium sp. (strain KMS).